Reading from the N-terminus, the 228-residue chain is Urease accessory protein UreF (228 aa).

This sequence belongs to the UreF family. In terms of assembly, ureD, UreF and UreG form a complex that acts as a GTP-hydrolysis-dependent molecular chaperone, activating the urease apoprotein by helping to assemble the nickel containing metallocenter of UreC. The UreE protein probably delivers the nickel.

It is found in the cytoplasm. Functionally, required for maturation of urease via the functional incorporation of the urease nickel metallocenter. This is Urease accessory protein UreF from Dechloromonas aromatica (strain RCB).